A 193-amino-acid chain; its full sequence is Signal peptidase I T (193 aa).

Over 1 to 25 the chain is Cytoplasmic; it reads MTEEKNTNTEKTAKKKTNTYLEWGK. A helical transmembrane segment spans residues 26 to 42; that stretch reads AIVIAVLLALLIRHFLF. Topologically, residues 43-193 are extracellular; sequence EPYLVEGSSM…FPFNEMRQTK (151 aa). Residues serine 51 and lysine 93 contribute to the active site.

The protein belongs to the peptidase S26 family.

Its subcellular location is the cell membrane. It catalyses the reaction Cleavage of hydrophobic, N-terminal signal or leader sequences from secreted and periplasmic proteins.. This Bacillus subtilis (strain 168) protein is Signal peptidase I T (sipT).